A 156-amino-acid chain; its full sequence is ATP synthase subunit b (156 aa).

Residues 7 to 27 (LFAQMVVFLILAWFTMKFVWP) form a helical membrane-spanning segment.

It belongs to the ATPase B chain family. As to quaternary structure, F-type ATPases have 2 components, F(1) - the catalytic core - and F(0) - the membrane proton channel. F(1) has five subunits: alpha(3), beta(3), gamma(1), delta(1), epsilon(1). F(0) has three main subunits: a(1), b(2) and c(10-14). The alpha and beta chains form an alternating ring which encloses part of the gamma chain. F(1) is attached to F(0) by a central stalk formed by the gamma and epsilon chains, while a peripheral stalk is formed by the delta and b chains.

The protein resides in the cell inner membrane. F(1)F(0) ATP synthase produces ATP from ADP in the presence of a proton or sodium gradient. F-type ATPases consist of two structural domains, F(1) containing the extramembraneous catalytic core and F(0) containing the membrane proton channel, linked together by a central stalk and a peripheral stalk. During catalysis, ATP synthesis in the catalytic domain of F(1) is coupled via a rotary mechanism of the central stalk subunits to proton translocation. Functionally, component of the F(0) channel, it forms part of the peripheral stalk, linking F(1) to F(0). This is ATP synthase subunit b from Paraburkholderia phymatum (strain DSM 17167 / CIP 108236 / LMG 21445 / STM815) (Burkholderia phymatum).